Consider the following 570-residue polypeptide: Probable metalloreductase AIM14 (570 aa).

Transmembrane regions (helical) follow at residues 21–41 (IKYG…LALL), 70–90 (AIHL…HYSL), 101–118 (LGRL…LTLR), 142–162 (IITV…AIDD), 177–197 (FVGF…IGPM), 204–224 (LFYI…PIHS), and 230–250 (FPFL…RIVF). The region spanning 101 to 219 (LGRLSYALIP…NLVNVAFILL (119 aa)) is the Ferric oxidoreductase domain. The FAD-binding FR-type domain occupies 250–388 (FAKSLMILNK…GGSGISFALP (139 aa)). The segment covering 481–505 (SNFNSENADSNDNTPETSHSPTKEN) has biased composition (polar residues). The interval 481 to 507 (SNFNSENADSNDNTPETSHSPTKENGS) is disordered.

Belongs to the ferric reductase (FRE) family. AIM14 subfamily. As to quaternary structure, interacts with ribosomes.

Its subcellular location is the membrane. In terms of biological role, probable cell surface metalloreductase. May be involved in iron or copper homeostasis. In Saccharomyces cerevisiae (strain RM11-1a) (Baker's yeast), this protein is Probable metalloreductase AIM14 (AIM14).